The sequence spans 657 residues: MGELADLVVVPSQPPLAGGRRDRLAALLELAAADDVDGLRGALAEGGEEAAELADGVGLWYGRSKAYEARTPLMVAATYGSAGVVSLLVGLGGCVDVNRRPGADGATALHCAASGGSRNAVAVVKLLLAAGADPATPDSAGRFPADVILAPPASPDALGDLEVLLGRRRALAVATSVASGSSSPPLSSSPDEGNRSPSSRSSSLSPITVDRGKKEYPVDPTLPDIKSSVYASDEFRMFAFKVRPCSRAYSHDWTECPFVHPGENARRRDPRKHPYTAVPCPNFRRPGGCPSGDSCEFSHGVFESWLHPSQYRTRLCKEGAACARRICFFAHDEDELRHVPHNSGAGLLSPRASSSIDMTAAAALGLLPGSPTRHFAPPPVSPSAGSNGGAAAAHWLQGSRLRSSFNARDAAVDDLGMLLEWESQYLGALCLPPSSRPQPRLSAGLSIRPTIAPSNLEDMYASDMAMSPRFPNDQGHSVYSPAHKSALLNKLHQQKGLLSPVNTNRMYSPRALDPSSLAHSPFGGMSPRSPRTMEPTSPLSARVGAPATQRPSVGSPRNSSAWGTVGSPMGKVDWGVDSEELVRLRRPAQPGFGEDETDVSWVQSLVSNAELNGKRGEVQGMPGTSALMNRPDLNNQGDLLDQTVIGAWLEQMHLDQK.

ANK repeat units follow at residues 68-97 and 104-136; these read EARTPLMVAATYGSAGVVSLLVGLGGCVDV and DGATALHCAASGGSRNAVAVVKLLLAAGADPAT. Residues 176–206 show a composition bias toward low complexity; that stretch reads SVASGSSSPPLSSSPDEGNRSPSSRSSSLSP. The segment at 176-222 is disordered; it reads SVASGSSSPPLSSSPDEGNRSPSSRSSSLSPITVDRGKKEYPVDPTL. C3H1-type zinc fingers lie at residues 274–302 and 311–333; these read PYTAVPCPNFRRPGGCPSGDSCEFSHGVF and YRTRLCKEGAACARRICFFAHDE. The segment at 507–566 is disordered; the sequence is YSPRALDPSSLAHSPFGGMSPRSPRTMEPTSPLSARVGAPATQRPSVGSPRNSSAWGTVG. The span at 549-562 shows a compositional bias: polar residues; that stretch reads QRPSVGSPRNSSAW.

This chain is Zinc finger CCCH domain-containing protein 50, found in Oryza sativa subsp. japonica (Rice).